Here is a 426-residue protein sequence, read N- to C-terminus: Glutamate-1-semialdehyde 2,1-aminomutase (426 aa).

Lys265 bears the N6-(pyridoxal phosphate)lysine mark.

It belongs to the class-III pyridoxal-phosphate-dependent aminotransferase family. HemL subfamily. In terms of assembly, homodimer. Pyridoxal 5'-phosphate is required as a cofactor.

Its subcellular location is the cytoplasm. The enzyme catalyses (S)-4-amino-5-oxopentanoate = 5-aminolevulinate. Its pathway is porphyrin-containing compound metabolism; protoporphyrin-IX biosynthesis; 5-aminolevulinate from L-glutamyl-tRNA(Glu): step 2/2. The sequence is that of Glutamate-1-semialdehyde 2,1-aminomutase from Salmonella enteritidis PT4 (strain P125109).